The sequence spans 791 residues: Ubiquitin carboxyl-terminal hydrolase 10-A (791 aa).

2 stretches are compositionally biased toward polar residues: residues 118–139 (FSES…SGTG) and 270–284 (DTTE…QTLE). 2 disordered regions span residues 118–156 (FSES…YYSY) and 270–291 (DTTE…EDTA). Residues 408–788 (RGLINKGNWC…TAYLLYYRRV (381 aa)) form the USP domain. Cys-417 (nucleophile) is an active-site residue. Positions 560 to 580 (EVNKEEQEGSDEEWEQVGPRN) are disordered. Residue His-742 is the Proton acceptor of the active site.

Belongs to the peptidase C19 family. USP10 subfamily.

It localises to the cytoplasm. Its subcellular location is the nucleus. The enzyme catalyses Thiol-dependent hydrolysis of ester, thioester, amide, peptide and isopeptide bonds formed by the C-terminal Gly of ubiquitin (a 76-residue protein attached to proteins as an intracellular targeting signal).. In terms of biological role, hydrolase that can remove conjugated ubiquitin from target proteins such as p53/tp53, rps2/us5, rps3/us3, rps10/eS10, becn1, snx3 and cftr. Acts as an essential regulator of p53/tp53 stability: in unstressed cells, specifically deubiquitinates p53/tp53 in the cytoplasm, leading to counteracts MDM2 action and stabilize p53/tp53. Following DNA damage, translocates to the nucleus and deubiquitinates p53/tp53, leading to regulate the p53/TP53-dependent DNA damage response. Component of a regulatory loop that controls autophagy and p53/tp53 levels. Plays a key role in 40S ribosome subunit recycling when a ribosome has stalled during translation: acts both by inhibiting formation of stress granules, which store stalled translation pre-initiation complexes, and mediating deubiquitination of 40S ribosome subunits. Deubiquitinates cftr in early endosomes, enhancing its endocytic recycling. This is Ubiquitin carboxyl-terminal hydrolase 10-A (usp10-a) from Xenopus laevis (African clawed frog).